The sequence spans 666 residues: DNA ligase (666 aa).

NAD(+) is bound by residues 31 to 35 (DKEFD), 80 to 81 (SL), and glutamate 110. Lysine 112 acts as the N6-AMP-lysine intermediate in catalysis. Residues arginine 133, glutamate 170, lysine 285, and lysine 309 each coordinate NAD(+). Residues cysteine 404, cysteine 407, cysteine 422, and cysteine 428 each coordinate Zn(2+). The region spanning 588–666 (GYTDKLAGQS…SEDEFLKLIS (79 aa)) is the BRCT domain.

This sequence belongs to the NAD-dependent DNA ligase family. LigA subfamily. It depends on Mg(2+) as a cofactor. Mn(2+) is required as a cofactor.

It carries out the reaction NAD(+) + (deoxyribonucleotide)n-3'-hydroxyl + 5'-phospho-(deoxyribonucleotide)m = (deoxyribonucleotide)n+m + AMP + beta-nicotinamide D-nucleotide.. In terms of biological role, DNA ligase that catalyzes the formation of phosphodiester linkages between 5'-phosphoryl and 3'-hydroxyl groups in double-stranded DNA using NAD as a coenzyme and as the energy source for the reaction. It is essential for DNA replication and repair of damaged DNA. In Bacteroides thetaiotaomicron (strain ATCC 29148 / DSM 2079 / JCM 5827 / CCUG 10774 / NCTC 10582 / VPI-5482 / E50), this protein is DNA ligase.